Consider the following 388-residue polypeptide: Galactokinase (388 aa).

Substrate is bound at residue 33-36 (EHTD). ATP is bound by residues Ser67 and 124 to 130 (GSGLSSS). Residues Ser130 and Glu162 each contribute to the Mg(2+) site. Asp174 acts as the Proton acceptor in catalysis. Substrate is bound at residue Tyr224.

Belongs to the GHMP kinase family. GalK subfamily.

The protein localises to the cytoplasm. The enzyme catalyses alpha-D-galactose + ATP = alpha-D-galactose 1-phosphate + ADP + H(+). It participates in carbohydrate metabolism; galactose metabolism. Functionally, catalyzes the transfer of the gamma-phosphate of ATP to D-galactose to form alpha-D-galactose-1-phosphate (Gal-1-P). This chain is Galactokinase, found in Streptococcus thermophilus.